Here is a 90-residue protein sequence, read N- to C-terminus: Probable Fe(2+)-trafficking protein (90 aa).

Belongs to the Fe(2+)-trafficking protein family.

Functionally, could be a mediator in iron transactions between iron acquisition and iron-requiring processes, such as synthesis and/or repair of Fe-S clusters in biosynthetic enzymes. This is Probable Fe(2+)-trafficking protein from Haemophilus influenzae (strain 86-028NP).